The following is a 58-amino-acid chain: Birtoxin (58 aa).

The LCN-type CS-alpha/beta domain occupies 3–58 (VPGNYPLDKDGNTYKCFLLGGNEECLNVCKLHGVQYGYCYASKCWCEYLEDDKDSV). 3 disulfide bridges follow: C18/C41, C27/C46, and C31/C48.

Expressed by the venom gland.

It is found in the secreted. Its function is as follows. Beta toxins bind voltage-independently at site-4 of sodium channels (Nav) and shift the voltage of activation toward more negative potentials thereby affecting sodium channel activation and promoting spontaneous and repetitive firing. Moderately toxic, but very high abundant. Does not target reptilian channels. Does not produce effect when administered to blowfly and cabbage looper larvae. In mice, produces convulsions, tremors, increased ventilation and, subsequently, death. The protein is Birtoxin of Parabuthus transvaalicus (Transvaal thick-tailed scorpion).